Reading from the N-terminus, the 267-residue chain is 2-keto-3-deoxy-L-rhamnonate aldolase (267 aa).

The active-site Proton acceptor is the histidine 49. Glutamine 151 is a substrate binding site. Glutamate 153 contacts Mg(2+). Residues alanine 178 and aspartate 179 each contribute to the substrate site. Aspartate 179 contacts Mg(2+).

Belongs to the HpcH/HpaI aldolase family. KDR aldolase subfamily. As to quaternary structure, homohexamer. Requires Mg(2+) as cofactor.

It catalyses the reaction 2-dehydro-3-deoxy-L-rhamnonate = (S)-lactaldehyde + pyruvate. In terms of biological role, catalyzes the reversible retro-aldol cleavage of 2-keto-3-deoxy-L-rhamnonate (KDR) to pyruvate and lactaldehyde. The polypeptide is 2-keto-3-deoxy-L-rhamnonate aldolase (Salmonella dublin (strain CT_02021853)).